We begin with the raw amino-acid sequence, 209 residues long: MITLLNLLLAEIAGFITYQHFTASPLRYFIPYPAELLLFAIPLVGLAVRRPFSFYYYSVLIFFNISPILARSETFEGIIDTLNAIDALYNTGTSAIAESLKVAFIGHSTSVDGLLAVTWLYILAEVFQGNWESIKGAKTGGVEIERAYLVYLPAFFFALLVYFLYPFLMSEIDFGLERIVAAVLGIAAFFAGVYLLSRGVEEEDINSGG.

Helical transmembrane passes span Leu26–Val48, Ala147–Met169, and Ile179–Leu196.

It localises to the cell membrane. This is an uncharacterized protein from Archaeoglobus fulgidus (strain ATCC 49558 / DSM 4304 / JCM 9628 / NBRC 100126 / VC-16).